The sequence spans 89 residues: MSITAERKAEVIQGNANKAGDTGSPEVQVAILSERIVNLTAHFKTHTKDNHSRRGLLKLVSTRRSLLDYVKKKDEARYKALLEKHNIRR.

The segment covering 1 to 10 (MSITAERKAE) has biased composition (basic and acidic residues). Residues 1-24 (MSITAERKAEVIQGNANKAGDTGS) are disordered.

The protein belongs to the universal ribosomal protein uS15 family. Part of the 30S ribosomal subunit. Forms a bridge to the 50S subunit in the 70S ribosome, contacting the 23S rRNA.

Its function is as follows. One of the primary rRNA binding proteins, it binds directly to 16S rRNA where it helps nucleate assembly of the platform of the 30S subunit by binding and bridging several RNA helices of the 16S rRNA. In terms of biological role, forms an intersubunit bridge (bridge B4) with the 23S rRNA of the 50S subunit in the ribosome. This chain is Small ribosomal subunit protein uS15, found in Rhodopseudomonas palustris (strain BisB5).